A 365-amino-acid chain; its full sequence is ATP-dependent (S)-NAD(P)H-hydrate dehydratase (365 aa).

Residues Met1 to Arg43 constitute a chloroplast transit peptide. N-acetylserine is present on Leu2. A YjeF C-terminal domain is found at Ala53–Ile361. Residues Gly169 and Asn222–Arg228 contribute to the (6S)-NADPHX site. ATP is bound by residues Lys262 to Asp266 and Gly281 to Gly290. Asp291 contacts (6S)-NADPHX.

Belongs to the NnrD/CARKD family. Requires Mg(2+) as cofactor.

The protein resides in the plastid. Its subcellular location is the chloroplast. It localises to the cytoplasm. It carries out the reaction (6S)-NADHX + ATP = ADP + phosphate + NADH + H(+). It catalyses the reaction (6S)-NADPHX + ATP = ADP + phosphate + NADPH + H(+). In terms of biological role, catalyzes the dehydration of the S-form of NAD(P)HX at the expense of ATP, which is converted to ADP. Together with NAD(P)HX epimerase, which catalyzes the epimerization of the S- and R-forms, the enzyme allows the repair of both epimers of NAD(P)HX, a damaged form of NAD(P)H that is a result of enzymatic or heat-dependent hydration. This Arabidopsis thaliana (Mouse-ear cress) protein is ATP-dependent (S)-NAD(P)H-hydrate dehydratase.